Here is a 156-residue protein sequence, read N- to C-terminus: Arginine repressor (156 aa).

It belongs to the ArgR family.

Its subcellular location is the cytoplasm. Its pathway is amino-acid biosynthesis; L-arginine biosynthesis [regulation]. Regulates arginine biosynthesis genes. The sequence is that of Arginine repressor from Shewanella pealeana (strain ATCC 700345 / ANG-SQ1).